The chain runs to 398 residues: S-adenosylmethionine synthase (398 aa).

136 to 141 (GTGSSD) contributes to the ATP binding site.

It belongs to the AdoMet synthase 2 family. The cofactor is Mg(2+).

It catalyses the reaction L-methionine + ATP + H2O = S-adenosyl-L-methionine + phosphate + diphosphate. The protein operates within amino-acid biosynthesis; S-adenosyl-L-methionine biosynthesis; S-adenosyl-L-methionine from L-methionine: step 1/1. Catalyzes the formation of S-adenosylmethionine from methionine and ATP. This chain is S-adenosylmethionine synthase, found in Methanosarcina barkeri (strain Fusaro / DSM 804).